The sequence spans 325 residues: Glutaminase (325 aa).

Serine 76, asparagine 125, glutamate 169, asparagine 176, tyrosine 200, tyrosine 252, and valine 270 together coordinate substrate.

It belongs to the glutaminase family. Homotetramer.

The catalysed reaction is L-glutamine + H2O = L-glutamate + NH4(+). This chain is Glutaminase, found in Clavibacter michiganensis subsp. michiganensis (strain NCPPB 382).